The chain runs to 426 residues: D-tagatose-1,6-bisphosphate aldolase subunit KbaZ (426 aa).

It belongs to the GatZ/KbaZ family. KbaZ subfamily. As to quaternary structure, forms a complex with KbaY.

Its pathway is carbohydrate metabolism; D-tagatose 6-phosphate degradation; D-glyceraldehyde 3-phosphate and glycerone phosphate from D-tagatose 6-phosphate: step 2/2. Component of the tagatose-1,6-bisphosphate aldolase KbaYZ that is required for full activity and stability of the Y subunit. Could have a chaperone-like function for the proper and stable folding of KbaY. When expressed alone, KbaZ does not show any aldolase activity. This chain is D-tagatose-1,6-bisphosphate aldolase subunit KbaZ, found in Escherichia coli O6:H1 (strain CFT073 / ATCC 700928 / UPEC).